A 1343-amino-acid polypeptide reads, in one-letter code: DNA-directed RNA polymerase subunit beta (1343 aa).

It belongs to the RNA polymerase beta chain family. As to quaternary structure, the RNAP catalytic core consists of 2 alpha, 1 beta, 1 beta' and 1 omega subunit. When a sigma factor is associated with the core the holoenzyme is formed, which can initiate transcription.

It carries out the reaction RNA(n) + a ribonucleoside 5'-triphosphate = RNA(n+1) + diphosphate. Functionally, DNA-dependent RNA polymerase catalyzes the transcription of DNA into RNA using the four ribonucleoside triphosphates as substrates. This is DNA-directed RNA polymerase subunit beta from Shewanella sediminis (strain HAW-EB3).